The chain runs to 618 residues: UvrABC system protein C (618 aa).

Positions 13–92 (DKPGVYLMKN…IKKYRPKYNI (80 aa)) constitute a GIY-YIG domain. The UVR domain maps to 204 to 239 (LDIVENFKLNMEKAAENLEFEKAAMLRDKINIIEKI).

This sequence belongs to the UvrC family. In terms of assembly, interacts with UvrB in an incision complex.

It localises to the cytoplasm. The UvrABC repair system catalyzes the recognition and processing of DNA lesions. UvrC both incises the 5' and 3' sides of the lesion. The N-terminal half is responsible for the 3' incision and the C-terminal half is responsible for the 5' incision. The polypeptide is UvrABC system protein C (Clostridium botulinum (strain Kyoto / Type A2)).